A 156-amino-acid chain; its full sequence is Small ribosomal subunit protein uS7 (156 aa).

This sequence belongs to the universal ribosomal protein uS7 family. As to quaternary structure, part of the 30S ribosomal subunit. Contacts proteins S9 and S11.

Its function is as follows. One of the primary rRNA binding proteins, it binds directly to 16S rRNA where it nucleates assembly of the head domain of the 30S subunit. Is located at the subunit interface close to the decoding center, probably blocks exit of the E-site tRNA. The chain is Small ribosomal subunit protein uS7 from Pelagibacter ubique (strain HTCC1062).